A 121-amino-acid chain; its full sequence is Large ribosomal subunit protein uL18 (121 aa).

It belongs to the universal ribosomal protein uL18 family. In terms of assembly, part of the 50S ribosomal subunit; part of the 5S rRNA/L5/L18/L25 subcomplex. Contacts the 5S and 23S rRNAs.

In terms of biological role, this is one of the proteins that bind and probably mediate the attachment of the 5S RNA into the large ribosomal subunit, where it forms part of the central protuberance. The protein is Large ribosomal subunit protein uL18 of Leptothrix cholodnii (strain ATCC 51168 / LMG 8142 / SP-6) (Leptothrix discophora (strain SP-6)).